The following is a 236-amino-acid chain: Flagellar L-ring protein (236 aa).

Residues 1–16 (MRMQLTAVLAASLLAG) form the signal peptide. Cys17 is lipidated: N-palmitoyl cysteine. Residue Cys17 is the site of S-diacylglycerol cysteine attachment.

It belongs to the FlgH family. The basal body constitutes a major portion of the flagellar organelle and consists of four rings (L,P,S, and M) mounted on a central rod.

The protein resides in the cell outer membrane. The protein localises to the bacterial flagellum basal body. In terms of biological role, assembles around the rod to form the L-ring and probably protects the motor/basal body from shearing forces during rotation. In Sinorhizobium fredii (strain NBRC 101917 / NGR234), this protein is Flagellar L-ring protein.